The primary structure comprises 275 residues: Ammonia transport outward protein 3 (275 aa).

Residues 1–84 are Extracellular-facing; sequence MTSSASSPQD…NCAKYTPHQF (84 aa). The residue at position 4 (serine 4) is a Phosphoserine. Residues 85–105 traverse the membrane as a helical segment; that stretch reads ANPVPLGLASFSLSCLVLSLI. The Cytoplasmic segment spans residues 106–120; sequence NANVRGVTDGKWALS. Residues 121 to 141 traverse the membrane as a helical segment; it reads LFMFFGGAIELFAGLLCFVIG. The Extracellular segment spans residues 142-181; the sequence is DTYAMTVFSSFGGFWICYGYGLTDTDNLVSGYTDPTMLNN. Residues 182–202 traverse the membrane as a helical segment; it reads VIGFFLAGWTVFTFLMLMCTL. Residues 203–207 lie on the Cytoplasmic side of the membrane; that stretch reads KSTWG. The chain crosses the membrane as a helical span at residues 208 to 228; that stretch reads LFLLLTFLDLTFLLLCIGTFI. The Extracellular segment spans residues 229–236; sequence DNNNLKMA. Residues 237 to 257 traverse the membrane as a helical segment; the sequence is GGYFGILSSCCGWYSLYCSVV. Over 258–275 the chain is Cytoplasmic; sequence SPSNSYLAFRAHTMPNAP.

It belongs to the acetate uptake transporter (AceTr) (TC 2.A.96) family.

It localises to the cell membrane. In terms of biological role, transporter protein required for ammonia export. Induced in rho(0) cells, probably to eliminate the excess ammonia that arises because of a potential defect in ammonia assimilation in those cells. The protein is Ammonia transport outward protein 3 (ATO3) of Saccharomyces cerevisiae (strain ATCC 204508 / S288c) (Baker's yeast).